A 210-amino-acid polypeptide reads, in one-letter code: HTH-type transcriptional regulator MtrR (210 aa).

Residues 9–69 (LKTKEHLMLA…ALFQRICDDI (61 aa)) form the HTH tetR-type domain. The H-T-H motif DNA-binding region spans 32–51 (SLNEIAQAAGVTRGALYWHF).

In terms of assembly, homodimer. Binds to DNA as a pair of dimers.

DNA binding is affected significantly by increasing the NaCl concentration. Functionally, controls the permeability of the cell envelope to hydrophobic compounds such as antibiotics and detergents. Represses transcription of the mtrCDE-encoded efflux pump by binding within the mtrCDE promoter. Also negatively regulates the expression of farR, by binding to its promoter region, leading indirectly to the positive regulation of expression of the farAB-encoded efflux pump. In Neisseria gonorrhoeae, this protein is HTH-type transcriptional regulator MtrR.